The chain runs to 662 residues: MGKFIQWIKQPSISKPLIAAFLAVLILPVGVLAYFSYQSAWNALDRELISSAKGNVEELNSTLQNKLEDKVKAIDYYSETVDKDILLGKNKTLLKEKFKQYTTLNDDVGAIYAASEDKKLYKYPDSGVPKGFDPTGRDWYKQAVAEKGQAVFSEPYTDEATGDIVVTISKQLKDGSGVIALDLNLDEVLTASKRIKIGKEGFAFITTGNKKYIAHPTIKPGTTGSGDWTNQVYSKKEGSFEYTFEGKEKKMAFTTNKLTGWKIAGTYFVSELQDASSPVLNTAVIILCVSIVIGGILILYIIRAITKPLRKLVSTSAKISSGDLTEVIDIHSKNEFGQLGESFNEMSASLRSVIGVIQTSVENVASSSEELTASAAQTSKATEHITLAIEQFSDGNEAQSEKLETSSNHLSQMNEGISKVAQASSTITKSSIQSSEAAGSGEKLVEHTVGQMKTIDQSVQKAEAVVKGLETKSQDITSILNVINGIADQTNLLALNAAIEAARAGEYGRGFSVVAEEVRKLAVQSADSAKEIEGLIQEIVREISTSLSMFQSVNHEVKEGLQITDQTAESFKQIYEMTTQISGELQNLNATVEQLSAGSQEVSSAVEDISAVAKESSAGIQDIAASAEEQLASMEEISSSAETLANMAEELQDITKKFKIES.

Over 1-16 (MGKFIQWIKQPSISKP) the chain is Cytoplasmic. Residues 17–37 (LIAAFLAVLILPVGVLAYFSY) traverse the membrane as a helical segment. The Extracellular portion of the chain corresponds to 38 to 281 (QSAWNALDRE…LQDASSPVLN (244 aa)). One can recognise a Cache domain in the interval 153-228 (SEPYTDEATG…KPGTTGSGDW (76 aa)). The chain crosses the membrane as a helical span at residues 282-302 (TAVIILCVSIVIGGILILYII). Residues 303–355 (RAITKPLRKLVSTSAKISSGDLTEVIDIHSKNEFGQLGESFNEMSASLRSVIG) form the HAMP domain. Residues 303–662 (RAITKPLRKL…DITKKFKIES (360 aa)) are Cytoplasmic-facing. Glutamate 370 bears the Glutamate methyl ester (Glu) mark. A Methyl-accepting transducer domain is found at 374–610 (SAAQTSKATE…EVSSAVEDIS (237 aa)). Glutamine 594 bears the Glutamate methyl ester (Gln) mark. 2 positions are modified to glutamate methyl ester (Glu): glutamate 629 and glutamate 636.

This sequence belongs to the methyl-accepting chemotaxis (MCP) protein family.

It is found in the cell membrane. Its function is as follows. Chemotactic-signal transducers respond to changes in the concentration of attractants and repellents in the environment, transduce a signal from the outside to the inside of the cell, and facilitate sensory adaptation through the variation of the level of methylation. All amino acids serve as attractants in B.subtilis, they appear to cause an increase in the turnover methyl groups, leading to methylation of an unidentified acceptor, while repellents have been shown to cause a decrease in methyl group turnover. The methyl groups are added by a methyltransferase and removed by a methylesterase. The sequence is that of Methyl-accepting chemotaxis protein TlpB (tlpB) from Bacillus subtilis (strain 168).